Reading from the N-terminus, the 183-residue chain is MSGNKEEEDPRIHGIKTKIRVVPDFPKKGIMFQDITTVLLDPKAFKDTIDLFVERYRDKNISVVAGIEARGFLFGPPIALAIGAKFVPLRKPKKLPGETIFEEYELEYGNDRLEMHIGAVEAGDRALVVDDLIATGGTLCAAINLLERVGAEVVECACVIELPELKGRQRLKGKPLCMLVEYR.

The protein belongs to the purine/pyrimidine phosphoribosyltransferase family. Homodimer.

Its subcellular location is the cytoplasm. It catalyses the reaction AMP + diphosphate = 5-phospho-alpha-D-ribose 1-diphosphate + adenine. The protein operates within purine metabolism; AMP biosynthesis via salvage pathway; AMP from adenine: step 1/1. Functionally, catalyzes a salvage reaction resulting in the formation of AMP, that is energically less costly than de novo synthesis. May contribute to the recycling of adenine into adenylate nucleotides and the inactivation of cytokinins by phosphoribosylation. Possesses low activity toward adenine and cytokinins. This Arabidopsis thaliana (Mouse-ear cress) protein is Adenine phosphoribosyltransferase 3 (APT3).